The chain runs to 577 residues: Aspartate--tRNA(Asp/Asn) ligase (577 aa).

E171 is a binding site for L-aspartate. The interval 195–198 (QLFK) is aspartate. L-aspartate is bound at residue R217. Residues 217–219 (RDE) and Q226 each bind ATP. L-aspartate is bound at residue H444. ATP is bound at residue E474. R481 lines the L-aspartate pocket. 526-529 (GFDR) provides a ligand contact to ATP.

Belongs to the class-II aminoacyl-tRNA synthetase family. Type 1 subfamily. Homodimer.

Its subcellular location is the cytoplasm. The catalysed reaction is tRNA(Asx) + L-aspartate + ATP = L-aspartyl-tRNA(Asx) + AMP + diphosphate. Functionally, aspartyl-tRNA synthetase with relaxed tRNA specificity since it is able to aspartylate not only its cognate tRNA(Asp) but also tRNA(Asn). Is 1.7 times more efficient at aminoacylating tRNA(Asp) over tRNA(Asn). Reaction proceeds in two steps: L-aspartate is first activated by ATP to form Asp-AMP and then transferred to the acceptor end of tRNA(Asp/Asn). In Helicobacter pylori (strain ATCC 700392 / 26695) (Campylobacter pylori), this protein is Aspartate--tRNA(Asp/Asn) ligase.